An 876-amino-acid polypeptide reads, in one-letter code: Alanine--tRNA ligase (876 aa).

His565, His569, Cys667, and His671 together coordinate Zn(2+).

It belongs to the class-II aminoacyl-tRNA synthetase family. Zn(2+) serves as cofactor.

The protein localises to the cytoplasm. It catalyses the reaction tRNA(Ala) + L-alanine + ATP = L-alanyl-tRNA(Ala) + AMP + diphosphate. In terms of biological role, catalyzes the attachment of alanine to tRNA(Ala) in a two-step reaction: alanine is first activated by ATP to form Ala-AMP and then transferred to the acceptor end of tRNA(Ala). Also edits incorrectly charged Ser-tRNA(Ala) and Gly-tRNA(Ala) via its editing domain. The polypeptide is Alanine--tRNA ligase (Staphylococcus aureus (strain Mu3 / ATCC 700698)).